The sequence spans 289 residues: Bidirectional sugar transporter SWEET15 (289 aa).

Topologically, residues 1 to 10 (MAMAMANHHT) are extracellular. A helical membrane pass occupies residues 11-31 (LGLIFGILGNIISFLVYFAPA). Residues 14 to 100 (IFGILGNIIS…LYFFYAPMQA (87 aa)) form the MtN3/slv 1 domain. The Cytoplasmic portion of the chain corresponds to 32 to 45 (PTFYRIYKRKSAEG). Residues 46–66 (FHSLPYIVALFSAMLWLYYAL) traverse the membrane as a helical segment. The Extracellular segment spans residues 67 to 70 (LKKD). A helical membrane pass occupies residues 71-91 (AFLLITINSFGCAIESFYILL). Topologically, residues 92–106 (YFFYAPMQAKKQTLK) are cytoplasmic. A helical transmembrane segment spans residues 107-127 (VVISLNVGVFSILVVLIQFLL). Residues 128–134 (KGSNRIN) lie on the Extracellular side of the membrane. Residues 135 to 155 (VFGWICASFSVAVFAAPLSIV) traverse the membrane as a helical segment. A MtN3/slv 2 domain is found at 136-219 (FGWICASFSV…VLYGFYRNAG (84 aa)). Over 156–167 (AKVIRTKSVEFM) the chain is Cytoplasmic. The helical transmembrane segment at 168–188 (PFSLSFFLTLSAIMWFAYGLL) threads the bilayer. Residues 189 to 193 (KNDPC) are Extracellular-facing. The helical transmembrane segment at 194–214 (VAIPNILGVILGLVQMVLYGF) threads the bilayer. At 215 to 289 (YRNAGKEKME…GELQPNGSTV (75 aa)) the chain is on the cytoplasmic side. The tract at residues 249-289 (GAQQNGIKKSGSEDVKDDEETGNREKSTENSGELQPNGSTV) is disordered. Residues 277–289 (ENSGELQPNGSTV) are compositionally biased toward polar residues.

Belongs to the SWEET sugar transporter family. Forms homooligomers and/or heterooligomers.

The protein localises to the cell membrane. Functionally, mediates both low-affinity uptake and efflux of sugar across the plasma membrane. The chain is Bidirectional sugar transporter SWEET15 from Vitis vinifera (Grape).